The primary structure comprises 352 residues: CRISPR-associated endonuclease Cas1 1 (352 aa).

Residues Glu-207, His-274, and Glu-289 each contribute to the Mn(2+) site.

Belongs to the CRISPR-associated endonuclease Cas1 family. In terms of assembly, homodimer, forms a heterotetramer with a Cas2 homodimer. Mg(2+) is required as a cofactor. The cofactor is Mn(2+).

In terms of biological role, CRISPR (clustered regularly interspaced short palindromic repeat), is an adaptive immune system that provides protection against mobile genetic elements (viruses, transposable elements and conjugative plasmids). CRISPR clusters contain spacers, sequences complementary to antecedent mobile elements, and target invading nucleic acids. CRISPR clusters are transcribed and processed into CRISPR RNA (crRNA). Acts as a dsDNA endonuclease. Involved in the integration of spacer DNA into the CRISPR cassette. The polypeptide is CRISPR-associated endonuclease Cas1 1 (Saccharolobus solfataricus (strain ATCC 35092 / DSM 1617 / JCM 11322 / P2) (Sulfolobus solfataricus)).